The following is a 471-amino-acid chain: Glutamate--tRNA ligase (471 aa).

A 'HIGH' region motif is present at residues 9–19; that stretch reads PSPTGYLHVGG. Zn(2+)-binding residues include Cys98, Cys100, Cys125, and His127. The 'KMSKS' region signature appears at 237 to 241; it reads KLSKR. Residue Lys240 participates in ATP binding.

Belongs to the class-I aminoacyl-tRNA synthetase family. Glutamate--tRNA ligase type 1 subfamily. As to quaternary structure, monomer. It depends on Zn(2+) as a cofactor.

It is found in the cytoplasm. The enzyme catalyses tRNA(Glu) + L-glutamate + ATP = L-glutamyl-tRNA(Glu) + AMP + diphosphate. Functionally, catalyzes the attachment of glutamate to tRNA(Glu) in a two-step reaction: glutamate is first activated by ATP to form Glu-AMP and then transferred to the acceptor end of tRNA(Glu). The protein is Glutamate--tRNA ligase of Salmonella paratyphi A (strain ATCC 9150 / SARB42).